Here is a 131-residue protein sequence, read N- to C-terminus: Holo-[acyl-carrier-protein] synthase (131 aa).

Residues aspartate 8 and glutamate 58 each contribute to the Mg(2+) site.

It belongs to the P-Pant transferase superfamily. AcpS family. Mg(2+) serves as cofactor.

It localises to the cytoplasm. It catalyses the reaction apo-[ACP] + CoA = holo-[ACP] + adenosine 3',5'-bisphosphate + H(+). Transfers the 4'-phosphopantetheine moiety from coenzyme A to a Ser of acyl-carrier-protein. This chain is Holo-[acyl-carrier-protein] synthase, found in Oenococcus oeni (strain ATCC BAA-331 / PSU-1).